The following is a 910-amino-acid chain: Constitutive coactivator of peroxisome proliferator-activated receptor gamma (910 aa).

3 disordered regions span residues 333-416 (SDAE…VPMC), 443-483 (SEPR…ESRQ), and 863-910 (SHHA…WRRY). Basic and acidic residues-rich tracts occupy residues 335 to 351 (AESR…ESRQ), 360 to 375 (ESRR…EPRQ), and 396 to 411 (ESRR…EPRQ). Residues 872–890 (QGSSYHRTGSGYSRSSQGQ) show a composition bias toward polar residues. Arg-885 bears the Omega-N-methylarginine mark. Over residues 901 to 910 (QYEHDQWRRY) the composition is skewed to basic and acidic residues.

It belongs to the constitutive coactivator of PPAR-gamma family. As to quaternary structure, interacts with ESR1 and RXRA. Interacts with PPARG; in a ligand-independent manner. Widely expressed.

It is found in the nucleus. Its function is as follows. Functions as a transactivator of PPARG and ESR1. Functions in adipogenesis through PPARG activation. The chain is Constitutive coactivator of peroxisome proliferator-activated receptor gamma (FAM120B) from Homo sapiens (Human).